Reading from the N-terminus, the 802-residue chain is Ribosomal protein S6 kinase alpha-5 (802 aa).

Over residues 1-22 (MEEEGGSSGGAAGTSADGGDGG) the composition is skewed to gly residues. Residues 1 to 23 (MEEEGGSSGGAAGTSADGGDGGE) are disordered. Residues 49 to 318 (FELLKVLGTG…ADEIKEHLFF (270 aa)) form the Protein kinase 1 domain. ATP is bound by residues 55-63 (LGTGAYGKV) and lysine 81. The active-site Proton acceptor is the aspartate 177. Residue serine 212 is modified to Phosphoserine; by autocatalysis. Positions 319–387 (QKINWDDLAA…VAPSILFKRN (69 aa)) constitute an AGC-kinase C-terminal domain. Serine 360 is subject to Phosphoserine; by MAPK1, MAPK3 and MAPK14. Residues serine 376 and serine 381 each carry the phosphoserine; by autocatalysis modification. The Protein kinase 2 domain occupies 426–687 (DLKDKPLGEG…MSGLRYNEWL (262 aa)). ATP contacts are provided by residues 432–440 (LGEGSFSIC) and lysine 455. Aspartate 544 functions as the Proton acceptor in the catalytic mechanism. Phosphothreonine; by MAPK1, MAPK3 and MAPK14 is present on threonine 581. Phosphoserine occurs at positions 647, 657, 691, and 695. Threonine 700 carries the post-translational modification Phosphothreonine; by MAPK1, MAPK3 and MAPK14. A disordered region spans residues 741–802 (AKRRKMKKTS…TLFQFSDSVA (62 aa)). Over residues 749–779 (TSTSTETRSSSSESSHSSSSHSHGKTTPTKT) the composition is skewed to low complexity. Serine 750, serine 752, and serine 758 each carry phosphoserine; by autocatalysis. Positions 780-802 (LQPSNPADSNNPETLFQFSDSVA) are enriched in polar residues. A Phosphoserine modification is found at serine 798.

This sequence belongs to the protein kinase superfamily. AGC Ser/Thr protein kinase family. S6 kinase subfamily. Forms a complex with either MAPK1/ERK2 or MAPK3/ERK1 in quiescent cells which transiently dissociates following mitogenic stimulation. Also associates with MAPK14/p38-alpha. Activated RPS6KA5 associates with and phosphorylates the NF-kappa-B p65 subunit RELA. Interacts with CREBBP and EP300. It depends on Mg(2+) as a cofactor. Post-translationally, ser-376 and Thr-581 phosphorylation is required for kinase activity. Ser-376 and Ser-212 are autophosphorylated by the C-terminal kinase domain, and their phosphorylation is essential for the catalytic activity of the N-terminal kinase domain. Phosphorylated at Ser-360, Thr-581 and Thr-700 by MAPK1/ERK2, MAPK3/ERK1 and MAPK14/p38-alpha. Autophosphorylated at Ser-750, Ser-752 and Ser-758 by the N-terminal kinase domain. In terms of processing, ubiquitinated. Widely expressed with high levels in heart, brain and placenta. Less abundant in lung, kidney and liver.

It localises to the nucleus. Its subcellular location is the cytoplasm. The catalysed reaction is L-seryl-[protein] + ATP = O-phospho-L-seryl-[protein] + ADP + H(+). It catalyses the reaction L-threonyl-[protein] + ATP = O-phospho-L-threonyl-[protein] + ADP + H(+). With respect to regulation, activated by phosphorylation at Ser-360, Thr-581 and Thr-700 by MAPK1/ERK2, MAPK3/ERK1 and MAPK14/p38-alpha, and by further autophosphorylation of Ser-212, Ser-376 and Ser-381 by the activated C-terminal kinase domain. The active N-terminal kinase domain finally phosphorylates downstream substrates, as well as Ser-750, Ser-752 and Ser-758 in its own C-terminal region. Its function is as follows. Serine/threonine-protein kinase that is required for the mitogen or stress-induced phosphorylation of the transcription factors CREB1 and ATF1 and for the regulation of the transcription factors RELA, STAT3 and ETV1/ER81, and that contributes to gene activation by histone phosphorylation and functions in the regulation of inflammatory genes. Phosphorylates CREB1 and ATF1 in response to mitogenic or stress stimuli such as UV-C irradiation, epidermal growth factor (EGF) and anisomycin. Plays an essential role in the control of RELA transcriptional activity in response to TNF and upon glucocorticoid, associates in the cytoplasm with the glucocorticoid receptor NR3C1 and contributes to RELA inhibition and repression of inflammatory gene expression. In skeletal myoblasts is required for phosphorylation of RELA at 'Ser-276' during oxidative stress. In erythropoietin-stimulated cells, is necessary for the 'Ser-727' phosphorylation of STAT3 and regulation of its transcriptional potential. Phosphorylates ETV1/ER81 at 'Ser-191' and 'Ser-216', and thereby regulates its ability to stimulate transcription, which may be important during development and breast tumor formation. Directly represses transcription via phosphorylation of 'Ser-1' of histone H2A. Phosphorylates 'Ser-10' of histone H3 in response to mitogenics, stress stimuli and EGF, which results in the transcriptional activation of several immediate early genes, including proto-oncogenes c-fos/FOS and c-jun/JUN. May also phosphorylate 'Ser-28' of histone H3. Mediates the mitogen- and stress-induced phosphorylation of high mobility group protein 1 (HMGN1/HMG14). In lipopolysaccharide-stimulated primary macrophages, acts downstream of the Toll-like receptor TLR4 to limit the production of pro-inflammatory cytokines. Functions probably by inducing transcription of the MAP kinase phosphatase DUSP1 and the anti-inflammatory cytokine interleukin 10 (IL10), via CREB1 and ATF1 transcription factors. Plays a role in neuronal cell death by mediating the downstream effects of excitotoxic injury. Phosphorylates TRIM7 at 'Ser-107' in response to growth factor signaling via the MEK/ERK pathway, thereby stimulating its ubiquitin ligase activity. The polypeptide is Ribosomal protein S6 kinase alpha-5 (RPS6KA5) (Homo sapiens (Human)).